The chain runs to 110 residues: Small ribosomal subunit protein bS18 (110 aa).

Positions methionine 1 to glycine 18 are enriched in low complexity. The tract at residues methionine 1–arginine 41 is disordered. Basic residues predominate over residues proline 32 to arginine 41.

The protein belongs to the bacterial ribosomal protein bS18 family. Part of the 30S ribosomal subunit. Forms a tight heterodimer with protein bS6.

Functionally, binds as a heterodimer with protein bS6 to the central domain of the 16S rRNA, where it helps stabilize the platform of the 30S subunit. In Trichlorobacter lovleyi (strain ATCC BAA-1151 / DSM 17278 / SZ) (Geobacter lovleyi), this protein is Small ribosomal subunit protein bS18.